We begin with the raw amino-acid sequence, 332 residues long: UPF0194 membrane protein YbhG (332 aa).

Positions 1-16 (MMKKPVVIGLAVVVLA) are cleaved as a signal peptide. Positions 108–209 (EEIAQAAAAV…LNLQDSTLIA (102 aa)) form a coiled coil.

It belongs to the UPF0194 family.

The protein localises to the periplasm. The chain is UPF0194 membrane protein YbhG from Escherichia coli O45:K1 (strain S88 / ExPEC).